The chain runs to 102 residues: Small ribosomal subunit protein uS10 (102 aa).

Belongs to the universal ribosomal protein uS10 family. In terms of assembly, part of the 30S ribosomal subunit.

In terms of biological role, involved in the binding of tRNA to the ribosomes. The sequence is that of Small ribosomal subunit protein uS10 from Methanobrevibacter smithii (strain ATCC 35061 / DSM 861 / OCM 144 / PS).